The chain runs to 382 residues: Lipid-A-disaccharide synthase (382 aa).

The protein belongs to the LpxB family.

It carries out the reaction a lipid X + a UDP-2-N,3-O-bis[(3R)-3-hydroxyacyl]-alpha-D-glucosamine = a lipid A disaccharide + UDP + H(+). It participates in bacterial outer membrane biogenesis; LPS lipid A biosynthesis. Functionally, condensation of UDP-2,3-diacylglucosamine and 2,3-diacylglucosamine-1-phosphate to form lipid A disaccharide, a precursor of lipid A, a phosphorylated glycolipid that anchors the lipopolysaccharide to the outer membrane of the cell. This Alkalilimnicola ehrlichii (strain ATCC BAA-1101 / DSM 17681 / MLHE-1) protein is Lipid-A-disaccharide synthase.